A 168-amino-acid chain; its full sequence is UPF0303 protein YE1367 (168 aa).

This sequence belongs to the UPF0303 family.

The sequence is that of UPF0303 protein YE1367 from Yersinia enterocolitica serotype O:8 / biotype 1B (strain NCTC 13174 / 8081).